The chain runs to 432 residues: Protein distal antenna-related (432 aa).

In terms of domain architecture, HTH psq-type spans 15–66 (TRGKRPLRNLTPNDKVRAIQRIHNGETKASVSRDLGVPESTLRGWCKNEQKL). A DNA-binding region (H-T-H motif) is located at residues 42-62 (KASVSRDLGVPESTLRGWCKN). Disordered regions lie at residues 195–221 (ESAD…NSTK) and 401–432 (SCAS…DGEQ). Composition is skewed to polar residues over residues 202–211 (KSPQSTTDIT) and 401–425 (SCAS…TSIA).

As to quaternary structure, interacts with itself, dan, ey and dac to form a complex (or complexes) containing the RD factors.

The protein localises to the nucleus. Functionally, probable transcription factor with a role in the retinal determination (RD) network. Regulates ato expression and is required for normal R8 induction and differentiation. Danr appears to repress Dan expression, but Dan is required for Danr expression anterior to the morphogenetic furrow (MF). Dan and Danr lie downstream of so and require dac function for highest levels of expression. Contributes to differentiation of antenna-specific characteristics; effector gene that acts downstream of homothorax (hth), Distal-less (Dll), cut (ct) and spineless (ss) genes to control differentiation of distal antennal structures. In Drosophila pseudoobscura pseudoobscura (Fruit fly), this protein is Protein distal antenna-related.